The primary structure comprises 324 residues: uncharacterized protein (324 aa).

Residues 1 to 58 (MDIKVMEYAAEIARRQSFTKAAEHLHIAQPSLSQQIKKLEAELGLTLFHRSHGSVTLT) enclose the HTH lysR-type domain. The segment at residues 18 to 37 (FTKAAEHLHIAQPSLSQQIK) is a DNA-binding region (H-T-H motif).

It belongs to the LysR transcriptional regulatory family.

This is an uncharacterized protein from Bacillus subtilis (strain 168).